The primary structure comprises 468 residues: Glutamate--tRNA ligase (468 aa).

Positions 9-19 match the 'HIGH' region motif; that stretch reads PSPTGSIHIGN. A 'KMSKS' region motif is present at residues 239-243; that stretch reads KLSKR. Lys242 is a binding site for ATP.

It belongs to the class-I aminoacyl-tRNA synthetase family. Glutamate--tRNA ligase type 1 subfamily. As to quaternary structure, monomer.

The protein localises to the cytoplasm. It carries out the reaction tRNA(Glu) + L-glutamate + ATP = L-glutamyl-tRNA(Glu) + AMP + diphosphate. Its function is as follows. Catalyzes the attachment of glutamate to tRNA(Glu) in a two-step reaction: glutamate is first activated by ATP to form Glu-AMP and then transferred to the acceptor end of tRNA(Glu). This is Glutamate--tRNA ligase from Blochmanniella pennsylvanica (strain BPEN).